We begin with the raw amino-acid sequence, 358 residues long: UDP-N-acetylglucosamine--N-acetylmuramyl-(pentapeptide) pyrophosphoryl-undecaprenol N-acetylglucosamine transferase (358 aa).

UDP-N-acetyl-alpha-D-glucosamine contacts are provided by residues 13–15 (TGG), Asn125, Arg162, Ser190, Ile244, 263–268 (ALTVAE), and Gln289.

It belongs to the glycosyltransferase 28 family. MurG subfamily.

The protein resides in the cell inner membrane. The catalysed reaction is di-trans,octa-cis-undecaprenyl diphospho-N-acetyl-alpha-D-muramoyl-L-alanyl-D-glutamyl-meso-2,6-diaminopimeloyl-D-alanyl-D-alanine + UDP-N-acetyl-alpha-D-glucosamine = di-trans,octa-cis-undecaprenyl diphospho-[N-acetyl-alpha-D-glucosaminyl-(1-&gt;4)]-N-acetyl-alpha-D-muramoyl-L-alanyl-D-glutamyl-meso-2,6-diaminopimeloyl-D-alanyl-D-alanine + UDP + H(+). The protein operates within cell wall biogenesis; peptidoglycan biosynthesis. In terms of biological role, cell wall formation. Catalyzes the transfer of a GlcNAc subunit on undecaprenyl-pyrophosphoryl-MurNAc-pentapeptide (lipid intermediate I) to form undecaprenyl-pyrophosphoryl-MurNAc-(pentapeptide)GlcNAc (lipid intermediate II). This is UDP-N-acetylglucosamine--N-acetylmuramyl-(pentapeptide) pyrophosphoryl-undecaprenol N-acetylglucosamine transferase from Halorhodospira halophila (strain DSM 244 / SL1) (Ectothiorhodospira halophila (strain DSM 244 / SL1)).